Here is a 320-residue protein sequence, read N- to C-terminus: MSTLTIDPTSIPPLEGKTAVVTATPLVPGGASGIGLAAAKIMLQKGATVYALDRQEPIEAVPGLKFRRCDVTSWSALREVFDEIQQVHLAFANAGICDKSPESYYDDVCDNGNLQEPDYSMIDVNLKAVLNFVKLARHSMRRHQVQGSIVITASSTGLVPEQSAPVYSSTKFAVIGLVRTLRSVLIQENITINAVAPFVTTTGMAPAEAMVPLKNLGVQTSPADFVGLALVYSAVARQTRRVEAYGKETEEDILEHGRWNGRVILTLGDKYTEVEEEFSKSRPLWTGGEVLQSIRLQQAVLDFRHGGVAIKSNRPSNQLN.

Residues Ser32, Ile34, Gln55, Asp70, Asn93, Lys134, Tyr167, Lys171, and Thr202 each coordinate NADP(+). Residue Tyr167 is the Proton acceptor of the active site. The active-site Lowers pKa of active site Tyr is Lys171.

Belongs to the short-chain dehydrogenases/reductases (SDR) family.

The protein operates within mycotoxin biosynthesis. Short-chain dehydrogenase/reductase; part of the core atranone cluster (CAC) which products are predicted to catalyze most or all steps of mycotoxin atranone synthesis, starting from geranylgeranyl pyrophosphate (GGPP). The initial cyclization of GGPP to dolabellane is probably performed by the terpene cyclase ATR13. The Baeyer-Villiger oxidation near the end of the atranone synthesis, which converts atranones D and E to atranones F and G is predicted to be catalyzed by the monooxygenase ATR8. Of the CAC's other predicted gene products, the reducing PKS ATR6 might synthesize a polyketide chain. This polyketide is probably transferred onto the atranone backbone by the polyketide transferase ATR5. Other predicted CAC products include 4 oxygenases (ATR2, ATR3, ATR4, and ATR14), 3 short-chain reductases (ATR7, ATR9, and ATR10), and a methyltransferase (ATR12). These may all be involved in the various steps of atranone biosynthesis, although their specific roles must await experimental determination. This chain is Short-chain dehydrogenase/reductase ATR7, found in Stachybotrys chlorohalonatus (strain IBT 40285).